A 481-amino-acid chain; its full sequence is ATP synthase subunit beta, plastid (481 aa).

162–169 is a binding site for ATP; the sequence is GGAGVGKT.

The protein belongs to the ATPase alpha/beta chains family. As to quaternary structure, F-type ATPases have 2 components, CF(1) - the catalytic core - and CF(0) - the membrane proton channel. CF(1) has five subunits: alpha(3), beta(3), gamma(1), delta(1), epsilon(1). CF(0) has four main subunits: a(1), b(1), b'(1) and c(9-12).

It is found in the plastid membrane. It catalyses the reaction ATP + H2O + 4 H(+)(in) = ADP + phosphate + 5 H(+)(out). Functionally, produces ATP from ADP in the presence of a proton gradient across the membrane. The catalytic sites are hosted primarily by the beta subunits. In Prototheca wickerhamii, this protein is ATP synthase subunit beta, plastid (atpB).